Reading from the N-terminus, the 288-residue chain is ATP synthase gamma chain (288 aa).

The protein belongs to the ATPase gamma chain family. In terms of assembly, F-type ATPases have 2 components, CF(1) - the catalytic core - and CF(0) - the membrane proton channel. CF(1) has five subunits: alpha(3), beta(3), gamma(1), delta(1), epsilon(1). CF(0) has three main subunits: a, b and c.

It is found in the cell inner membrane. Functionally, produces ATP from ADP in the presence of a proton gradient across the membrane. The gamma chain is believed to be important in regulating ATPase activity and the flow of protons through the CF(0) complex. In Glaesserella parasuis serovar 5 (strain SH0165) (Haemophilus parasuis), this protein is ATP synthase gamma chain.